Consider the following 492-residue polypeptide: N-succinylglutamate 5-semialdehyde dehydrogenase (492 aa).

NAD(+) is bound at residue 220 to 225 (GSANTG). Active-site residues include glutamate 243 and cysteine 277.

The protein belongs to the aldehyde dehydrogenase family. AstD subfamily.

The enzyme catalyses N-succinyl-L-glutamate 5-semialdehyde + NAD(+) + H2O = N-succinyl-L-glutamate + NADH + 2 H(+). The protein operates within amino-acid degradation; L-arginine degradation via AST pathway; L-glutamate and succinate from L-arginine: step 4/5. In terms of biological role, catalyzes the NAD-dependent reduction of succinylglutamate semialdehyde into succinylglutamate. The chain is N-succinylglutamate 5-semialdehyde dehydrogenase from Shigella flexneri.